The following is a 213-amino-acid chain: NADH-quinone oxidoreductase subunit C (213 aa).

It belongs to the complex I 30 kDa subunit family. NDH-1 is composed of 14 different subunits. Subunits NuoB, C, D, E, F, and G constitute the peripheral sector of the complex.

It localises to the cell inner membrane. The catalysed reaction is a quinone + NADH + 5 H(+)(in) = a quinol + NAD(+) + 4 H(+)(out). Its function is as follows. NDH-1 shuttles electrons from NADH, via FMN and iron-sulfur (Fe-S) centers, to quinones in the respiratory chain. The immediate electron acceptor for the enzyme in this species is believed to be ubiquinone. Couples the redox reaction to proton translocation (for every two electrons transferred, four hydrogen ions are translocated across the cytoplasmic membrane), and thus conserves the redox energy in a proton gradient. The chain is NADH-quinone oxidoreductase subunit C from Rhodospirillum rubrum (strain ATCC 11170 / ATH 1.1.1 / DSM 467 / LMG 4362 / NCIMB 8255 / S1).